The chain runs to 173 residues: RNA pyrophosphohydrolase (173 aa).

One can recognise a Nudix hydrolase domain in the interval 11-164 (PYRKCVGIVV…KKHVYMKVVS (154 aa)). The short motif at 52-73 (GGIDEDEKPLDAAYRELYEETG) is the Nudix box element.

This sequence belongs to the Nudix hydrolase family. RppH subfamily. It depends on a divalent metal cation as a cofactor.

In terms of biological role, accelerates the degradation of transcripts by removing pyrophosphate from the 5'-end of triphosphorylated RNA, leading to a more labile monophosphorylated state that can stimulate subsequent ribonuclease cleavage. The sequence is that of RNA pyrophosphohydrolase from Bartonella tribocorum (strain CIP 105476 / IBS 506).